We begin with the raw amino-acid sequence, 59 residues long: Movement protein TGBp3 (59 aa).

At 1–3 (MHL) the chain is on the lumenal side. Residues 4 to 21 (AIVGALTLVLTLFVLHYT) traverse the membrane as a helical segment. The Cytoplasmic segment spans residues 22–59 (TKDDRCYILINGHSAFTNCPASPDLAKVISQLKPHNHG).

This sequence belongs to the Tymovirales TGBp3 protein family.

It is found in the host endoplasmic reticulum membrane. In terms of biological role, plays a role in viral cell-to-cell propagation, by facilitating genome transport to neighboring plant cells through plasmosdesmata. May induce the formation of granular vesicles derived from the Endoplasmic reticulum, which align on actin filaments. The chain is Movement protein TGBp3 from Chenopodium album (Fat hen).